The sequence spans 266 residues: ATP synthase subunit a (266 aa).

5 consecutive transmembrane segments (helical) span residues 28–48 (SINV…LVIF), 88–108 (LIAP…LMDL), 141–161 (DVNI…FYSI), 206–226 (LFGN…LLPW), and 237–257 (AIFH…LTVV).

This sequence belongs to the ATPase A chain family. As to quaternary structure, F-type ATPases have 2 components, CF(1) - the catalytic core - and CF(0) - the membrane proton channel. CF(1) has five subunits: alpha(3), beta(3), gamma(1), delta(1), epsilon(1). CF(0) has three main subunits: a(1), b(2) and c(9-12). The alpha and beta chains form an alternating ring which encloses part of the gamma chain. CF(1) is attached to CF(0) by a central stalk formed by the gamma and epsilon chains, while a peripheral stalk is formed by the delta and b chains.

Its subcellular location is the cell inner membrane. Its function is as follows. Key component of the proton channel; it plays a direct role in the translocation of protons across the membrane. The protein is ATP synthase subunit a of Pectobacterium carotovorum subsp. carotovorum (strain PC1).